The following is a 104-amino-acid chain: Circadian clock oscillator protein KaiB (104 aa).

The protein belongs to the KaiB family. In terms of assembly, the KaiABC complex composition changes during the circadian cycle to control KaiC phosphorylation. Complexes KaiC(6), KaiA(2-4):KaiC(6), KaiB(6):KaiC(6) and KaiC(6):KaiB(6):KaiA(12) are among the most important forms, many form cooperatively. Undergoes a major conformational rearrangment; in the free state forms homotetramers as a dimer of dimers. When bound to the CI domain of KaiC switches to a monomeric thioredoxin-fold (KaiB(fs)). KaiB(fs) binds CikA, leading it to dephosphorylate phospho-RpaA.

In terms of biological role, key component of the KaiABC oscillator complex, which constitutes the main circadian regulator in cyanobacteria. Complex composition changes during the circadian cycle to control KaiC phosphorylation. KaiA stimulates KaiC autophosphorylation, while KaiB sequesters KaiA, leading to KaiC autodephosphorylation. Phospho-Ser-431 KaiC accumulation triggers binding of KaiB to form the KaiB(6):KaiC(6) complex, leading to changes in output regulators CikA and SasA. KaiB switches to a thioredoxin-like fold (KaiB(fs)) when bound to KaiC. KaiB(6):KaiC(6) formation exposes a site for KaiA binding that sequesters KaiA from KaiC, making the KaiC(6):KaiB(6):KaiA(12) complex that results in KaiC autodephosphorylation. Functionally, a metamorphic protein which reversibly switches between an inactive tetrameric fold and a rare, thioredoxin-like monomeric fold (KaiB(fs)). KaiB(fs) binds phospho-KaiC, KaiA and CikA. KaiA and CikA compete for binding to KaiB(fs), and KaiB(fs) and SasA compete for binding to KaiC, thus the clock oscillator and output signal pathway are tightly coupled. The protein is Circadian clock oscillator protein KaiB of Picosynechococcus sp. (strain ATCC 27264 / PCC 7002 / PR-6) (Agmenellum quadruplicatum).